The primary structure comprises 116 residues: Protein Rev (116 aa).

Serine 5 and serine 8 each carry phosphoserine; by host CK2. The segment at 18 to 26 (LIKLLYQSN) is homomultimerization. A disordered region spans residues 21–49 (LLYQSNPPPNPEGTRQARRNRRRRWRERQ). The short motif at 34–50 (TRQARRNRRRRWRERQR) is the Nuclear localization signal and RNA-binding (RRE) element. A compositionally biased stretch (basic residues) spans 36 to 47 (QARRNRRRRWRE). The short motif at 73–84 (LQLPPLERLTLD) is the Nuclear export signal and binding to XPO1 element. Residues serine 92 and serine 99 each carry the phosphoserine; by host modification. Residues 92 to 116 (SGTQGVGSPQILVESPTVLESGTKE) are disordered.

This sequence belongs to the HIV-1 REV protein family. In terms of assembly, homomultimer; when bound to the RRE. Multimeric assembly is essential for activity and may involve XPO1. Binds to human KPNB1, XPO1, TNPO1, RANBP5 and IPO7. Interacts with the viral Integrase. Interacts with human KHDRBS1. Interacts with human NAP1; this interaction decreases Rev multimerization and stimulates its activity. Interacts with human DEAD-box helicases DDX3 and DDX24; these interactions may serve for viral RNA export to the cytoplasm and packaging, respectively. Interacts with human PSIP1; this interaction may inhibit HIV-1 DNA integration by promoting dissociation of the Integrase-LEDGF/p75 complex. In terms of processing, asymmetrically arginine dimethylated at one site by host PRMT6. Methylation impairs the RNA-binding activity and export of viral RNA from the nucleus to the cytoplasm. Phosphorylated by protein kinase CK2. Presence of, and maybe binding to the N-terminus of the regulatory beta subunit of CK2 is necessary for CK2-mediated Rev's phosphorylation.

Its subcellular location is the host nucleus. The protein localises to the host nucleolus. It localises to the host cytoplasm. Functionally, escorts unspliced or incompletely spliced viral pre-mRNAs (late transcripts) out of the nucleus of infected cells. These pre-mRNAs carry a recognition sequence called Rev responsive element (RRE) located in the env gene, that is not present in fully spliced viral mRNAs (early transcripts). This function is essential since most viral proteins are translated from unspliced or partially spliced pre-mRNAs which cannot exit the nucleus by the pathway used by fully processed cellular mRNAs. Rev itself is translated from a fully spliced mRNA that readily exits the nucleus. Rev's nuclear localization signal (NLS) binds directly to KPNB1/Importin beta-1 without previous binding to KPNA1/Importin alpha-1. KPNB1 binds to the GDP bound form of RAN (Ran-GDP) and targets Rev to the nucleus. In the nucleus, the conversion from Ran-GDP to Ran-GTP dissociates Rev from KPNB1 and allows Rev's binding to the RRE in viral pre-mRNAs. Rev multimerization on the RRE via cooperative assembly exposes its nuclear export signal (NES) to the surface. Rev can then form a complex with XPO1/CRM1 and Ran-GTP, leading to nuclear export of the complex. Conversion from Ran-GTP to Ran-GDP mediates dissociation of the Rev/RRE/XPO1/RAN complex, so that Rev can return to the nucleus for a subsequent round of export. Beside KPNB1, also seems to interact with TNPO1/Transportin-1, RANBP5/IPO5 and IPO7/RANBP7 for nuclear import. The nucleoporin-like HRB/RIP is an essential cofactor that probably indirectly interacts with Rev to release HIV RNAs from the perinuclear region to the cytoplasm. The protein is Protein Rev of Homo sapiens (Human).